We begin with the raw amino-acid sequence, 683 residues long: DNA ligase (683 aa).

NAD(+) contacts are provided by residues 35-39 (DTEYD), 84-85 (SL), and Glu116. Residue Lys118 is the N6-AMP-lysine intermediate of the active site. The NAD(+) site is built by Arg139, Glu176, Lys293, and Lys317. Zn(2+) is bound by residues Cys419, Cys422, Cys437, and Cys443. The 82-residue stretch at 602–683 (AGPQLLAGKT…LMKLLAKGVE (82 aa)) folds into the BRCT domain.

It belongs to the NAD-dependent DNA ligase family. LigA subfamily. Requires Mg(2+) as cofactor. The cofactor is Mn(2+).

The enzyme catalyses NAD(+) + (deoxyribonucleotide)n-3'-hydroxyl + 5'-phospho-(deoxyribonucleotide)m = (deoxyribonucleotide)n+m + AMP + beta-nicotinamide D-nucleotide.. In terms of biological role, DNA ligase that catalyzes the formation of phosphodiester linkages between 5'-phosphoryl and 3'-hydroxyl groups in double-stranded DNA using NAD as a coenzyme and as the energy source for the reaction. It is essential for DNA replication and repair of damaged DNA. The protein is DNA ligase of Dechloromonas aromatica (strain RCB).